The following is a 279-amino-acid chain: MRGRRLSGPMFDAIAPIRMQRSRGAASVRLGPRGIEDLAQSGSAKAMLPRMTAGRPEIVFLNTAGGLASGDRLDYRIELAPRTQALATTQTAERAYRAKDAPAQIRLHLQVGEGGWLDWLPQETILYDGARLGRETAVDLAPGAGCLLLEPIILGRLAMGETIRHLQLTDRRIVRQDGRMIHHDALALDDAALSRLHHPAMLGKARAMASLALIAPHAADLLEPARAVLDEPGVTGAASAPPGRLILRLLADDGWPLRRQVIRLLRVLRPDPLPRIWQV.

It belongs to the UreD family. As to quaternary structure, ureD, UreF and UreG form a complex that acts as a GTP-hydrolysis-dependent molecular chaperone, activating the urease apoprotein by helping to assemble the nickel containing metallocenter of UreC. The UreE protein probably delivers the nickel.

It is found in the cytoplasm. In terms of biological role, required for maturation of urease via the functional incorporation of the urease nickel metallocenter. In Paracoccus denitrificans (strain Pd 1222), this protein is Urease accessory protein UreD.